The primary structure comprises 360 residues: SPRY domain-containing SOCS box protein 3 (360 aa).

Residues Arg-20 to His-55 are disordered. A B30.2/SPRY domain is found at Leu-85–Arg-274. Positions Ser-264 to Trp-315 constitute an SOCS box domain. The disordered stretch occupies residues Arg-323–Asp-350. The span at Thr-331–Thr-346 shows a compositional bias: low complexity.

It belongs to the SPSB family. As to quaternary structure, substrate-recognition component of the ECS(SPSB3) complex, composed of spsb3, cul5, elob, elob and rnf7/rbx2.

The protein resides in the nucleus. Its pathway is protein modification; protein ubiquitination. Substrate-recognition component of a cullin-5-RING E3 ubiquitin-protein ligase complex (ECS complex, also named CRL5 complex), which mediates the ubiquitination and subsequent proteasomal degradation of target proteins. The sequence is that of SPRY domain-containing SOCS box protein 3 (spsb3) from Xenopus tropicalis (Western clawed frog).